The sequence spans 127 residues: Glycine cleavage system H protein (127 aa).

The Lipoyl-binding domain maps to 24 to 105 (TLTVGVTDHA…AYAAWLFKLK (82 aa)). Lys65 carries the N6-lipoyllysine modification.

It belongs to the GcvH family. The glycine cleavage system is composed of four proteins: P, T, L and H. (R)-lipoate serves as cofactor.

The glycine cleavage system catalyzes the degradation of glycine. The H protein shuttles the methylamine group of glycine from the P protein to the T protein. This Azoarcus sp. (strain BH72) protein is Glycine cleavage system H protein.